Consider the following 189-residue polypeptide: dCTP deaminase (189 aa).

DCTP is bound by residues 112–117 (KSTYAR), 136–138 (TLE), Q157, Y171, and Q181. E138 (proton donor/acceptor) is an active-site residue.

The protein belongs to the dCTP deaminase family. In terms of assembly, homotrimer.

It carries out the reaction dCTP + H2O + H(+) = dUTP + NH4(+). Its pathway is pyrimidine metabolism; dUMP biosynthesis; dUMP from dCTP (dUTP route): step 1/2. In terms of biological role, catalyzes the deamination of dCTP to dUTP. The polypeptide is dCTP deaminase (Burkholderia orbicola (strain MC0-3)).